A 245-amino-acid polypeptide reads, in one-letter code: 1-(5-phosphoribosyl)-5-[(5-phosphoribosylamino)methylideneamino] imidazole-4-carboxamide isomerase (245 aa).

Asp7 serves as the catalytic Proton acceptor. Catalysis depends on Asp129, which acts as the Proton donor.

Belongs to the HisA/HisF family.

The protein localises to the cytoplasm. It carries out the reaction 1-(5-phospho-beta-D-ribosyl)-5-[(5-phospho-beta-D-ribosylamino)methylideneamino]imidazole-4-carboxamide = 5-[(5-phospho-1-deoxy-D-ribulos-1-ylimino)methylamino]-1-(5-phospho-beta-D-ribosyl)imidazole-4-carboxamide. The protein operates within amino-acid biosynthesis; L-histidine biosynthesis; L-histidine from 5-phospho-alpha-D-ribose 1-diphosphate: step 4/9. The chain is 1-(5-phosphoribosyl)-5-[(5-phosphoribosylamino)methylideneamino] imidazole-4-carboxamide isomerase from Shewanella putrefaciens (strain CN-32 / ATCC BAA-453).